The chain runs to 153 residues: 6,7-dimethyl-8-ribityllumazine synthase (153 aa).

Residues phenylalanine 22, 56 to 58 (AFE), and 80 to 82 (AVI) each bind 5-amino-6-(D-ribitylamino)uracil. 85–86 (ST) is a (2S)-2-hydroxy-3-oxobutyl phosphate binding site. Residue histidine 88 is the Proton donor of the active site. Residue phenylalanine 113 coordinates 5-amino-6-(D-ribitylamino)uracil. Residue arginine 127 coordinates (2S)-2-hydroxy-3-oxobutyl phosphate.

The protein belongs to the DMRL synthase family.

The catalysed reaction is (2S)-2-hydroxy-3-oxobutyl phosphate + 5-amino-6-(D-ribitylamino)uracil = 6,7-dimethyl-8-(1-D-ribityl)lumazine + phosphate + 2 H2O + H(+). Its pathway is cofactor biosynthesis; riboflavin biosynthesis; riboflavin from 2-hydroxy-3-oxobutyl phosphate and 5-amino-6-(D-ribitylamino)uracil: step 1/2. Catalyzes the formation of 6,7-dimethyl-8-ribityllumazine by condensation of 5-amino-6-(D-ribitylamino)uracil with 3,4-dihydroxy-2-butanone 4-phosphate. This is the penultimate step in the biosynthesis of riboflavin. This is 6,7-dimethyl-8-ribityllumazine synthase from Clostridium botulinum (strain Alaska E43 / Type E3).